Consider the following 358-residue polypeptide: cAMP-dependent protein kinase catalytic subunit PRKX (358 aa).

Met1 bears the N-acetylmethionine mark. The segment at 1–34 is disordered; that stretch reads MEAPGLAQAAAAESDSRKVAEETPDGAPALCPSP. The Protein kinase domain maps to 49–303; the sequence is FDTLATVGTG…ANDVKHHRWF (255 aa). Residues 55-63 and Lys78 each bind ATP; that span reads VGTGTFGRV. The active-site Proton acceptor is Asp172. Thr203 carries the phosphothreonine modification. The AGC-kinase C-terminal domain maps to 304–358; it reads RSVDWEAVPQRKLKPPIVPKIAGDGDTSNFETYPENDWDTAAPVPQKDLEIFKNF.

Belongs to the protein kinase superfamily. AGC Ser/Thr protein kinase family. cAMP subfamily. Like other cAMP-dependent protein kinases, the inactive holoenzyme is probably composed of 2 PRKX catalytic subunits and a dimer of regulatory subunits. Interacts (cAMP-dependent) specifically with the regulatory subunits PRKAR1A and PRKAR1B. Compared to other cAMP-dependent serine/threonine protein kinases, does not interact with the 2 other PKA regulatory subunits PRKAR2A and PRKAR2B. Interacts with cAMP-dependent protein kinase inhibitor/PKI proteins; inhibits PRKX. Interacts with GPKOW. Interacts with SMAD6. Interacts with PKD1; involved in differentiation and controlled morphogenesis of the kidney. Interacts with PIN1 (via WW domain). In terms of processing, phosphorylated; autophosphorylates in vitro. Widely expressed (at protein level). Specifically expressed in blood by macrophages and granulocytes according to PubMed:9860982.

Its subcellular location is the cytoplasm. The protein resides in the nucleus. The catalysed reaction is L-seryl-[protein] + ATP = O-phospho-L-seryl-[protein] + ADP + H(+). It carries out the reaction L-threonyl-[protein] + ATP = O-phospho-L-threonyl-[protein] + ADP + H(+). Its activity is regulated as follows. Binding of cAMP to the PRKAR1A or PRKAR1B regulatory subunits induces dissociation of the holoenzyme heterotetramer. The released monomeric PRKX is then active and able to phosphorylate its substrates. In terms of biological role, serine/threonine protein kinase regulated by and mediating cAMP signaling in cells. Acts through phosphorylation of downstream targets that may include CREB, SMAD6 and PKD1 and has multiple functions in cellular differentiation and epithelial morphogenesis. Regulates myeloid cell differentiation through SMAD6 phosphorylation. Involved in nephrogenesis by stimulating renal epithelial cell migration and tubulogenesis. Also involved in angiogenesis through stimulation of endothelial cell proliferation, migration and vascular-like structure formation. This is cAMP-dependent protein kinase catalytic subunit PRKX (PRKX) from Homo sapiens (Human).